The following is a 1165-amino-acid chain: Leptin receptor (1165 aa).

Positions 1-21 (MTCPKFSVALLHWEFIYVITA) are cleaved as a signal peptide. Residues 22–838 (FDLAYPITPW…TQDGEKHRND (817 aa)) are Extracellular-facing. Cystine bridges form between Cys37–Cys90, Cys89–Cys99, Cys131–Cys142, Cys186–Cys196, and Cys188–Cys193. Asn41, Asn55, Asn72, Asn80, and Asn98 each carry an N-linked (GlcNAc...) asparagine glycan. N-linked (GlcNAc...) asparagine glycosylation occurs at Asn187. Residues Asn206, Asn276, Asn347, and Asn397 are each glycosylated (N-linked (GlcNAc...) asparagine). One can recognise a Fibronectin type-III 1 domain in the interval 239-332 (PPLGLHMEIT…STPFTFTTQD (94 aa)). 2 cysteine pairs are disulfide-bonded: Cys352–Cys412 and Cys413–Cys418. Residue Asn433 is glycosylated (N-linked (GlcNAc...) asparagine). 3 cysteine pairs are disulfide-bonded: Cys436–Cys447, Cys473–Cys528, and Cys488–Cys498. Residues 467-484 (HRSSLYCSDVPSVHPISE) form a leptin-binding region. Fibronectin type-III domains are found at residues 539–634 (PPSS…TVVT), 642–736 (GPEF…WPMS), and 740–834 (IVQS…DGEK). The WSXWS motif motif lies at 622–626 (WSNWS). Residues Asn624, Asn659, Asn670, Asn697, Asn728, and Asn750 are each glycosylated (N-linked (GlcNAc...) asparagine). Residues 839–861 (AGLYVIVPIIISSSILLLGTLLM) traverse the membrane as a helical segment. Topologically, residues 862 to 1165 (SHQRMKKLFW…MENKMYDLTV (304 aa)) are cytoplasmic. The Box 1 motif signature appears at 870 to 878 (FWEDVPNPK). Ser881 bears the Phosphoserine mark. The interval 892–897 (ETFEHL) is required for JAK2 activation. The required for STAT3 phosphorylation stretch occupies residues 897 to 905 (LFIKHTESV). Phosphotyrosine; by JAK2 is present on Tyr986. Residue Tyr1079 is modified to Phosphotyrosine. A Phosphotyrosine; by JAK2 modification is found at Tyr1141.

It belongs to the type I cytokine receptor family. Type 2 subfamily. In terms of assembly, present as a mixture of monomers and dimers. The phosphorylated receptor binds a number of SH2 domain-containing proteins such as JAK2, STAT3, PTPN11, and SOCS3. Interaction with SOCS3 inhibits JAK/STAT signaling and MAPK cascade. On ligand binding, phosphorylated on two conserved C-terminal tyrosine residues by JAK2. Tyr-986 is required for complete binding and activation of PTPN11, ERK/FOS activation,for interaction with SOCS3 and SOCS3 mediated inhibition of leptin signaling. Phosphorylation on Tyr-1141 is required for STAT3 binding/activation. Phosphorylation of Tyr-1079 has a more accessory role. In terms of tissue distribution, kidney, liver, spleen, lung, brain, testis, uterus, ovary, corpus luteum, theca and granulosa cells.

The protein localises to the cell membrane. The protein resides in the basolateral cell membrane. Its function is as follows. Receptor for hormone LEP/leptin. On ligand binding, mediates LEP central and peripheral effects through the activation of different signaling pathways such as JAK2/STAT3 and MAPK cascade/FOS. In the hypothalamus, LEP acts as an appetite-regulating factor that induces a decrease in food intake and an increase in energy consumption by inducing anorexinogenic factors and suppressing orexigenic neuropeptides, also regulates bone mass and secretion of hypothalamo-pituitary-adrenal hormones. In the periphery, increases basal metabolism, influences reproductive function, regulates pancreatic beta-cell function and insulin secretion, is pro-angiogenic and affects innate and adaptive immunity. Control of energy homeostasis and melanocortin production (stimulation of POMC and full repression of AgRP transcription) is mediated by STAT3 signaling, whereas distinct signals regulate NPY and the control of fertility, growth and glucose homeostasis. Involved in the regulation of counter-regulatory response to hypoglycemia by inhibiting neurons of the parabrachial nucleus. Has a specific effect on T lymphocyte responses, differentially regulating the proliferation of naive and memory T-cells. Leptin increases Th1 and suppresses Th2 cytokine production. The chain is Leptin receptor (LEPR) from Sus scrofa (Pig).